Consider the following 314-residue polypeptide: 4-hydroxy-3-methylbut-2-enyl diphosphate reductase (314 aa).

A [4Fe-4S] cluster-binding site is contributed by Cys-12. Positions 43 and 81 each coordinate (2E)-4-hydroxy-3-methylbut-2-enyl diphosphate. Dimethylallyl diphosphate is bound by residues His-43 and His-81. Residues His-43 and His-81 each coordinate isopentenyl diphosphate. Residue Cys-103 participates in [4Fe-4S] cluster binding. His-131 provides a ligand contact to (2E)-4-hydroxy-3-methylbut-2-enyl diphosphate. His-131 is a binding site for dimethylallyl diphosphate. His-131 is a binding site for isopentenyl diphosphate. The Proton donor role is filled by Glu-133. Thr-170 contributes to the (2E)-4-hydroxy-3-methylbut-2-enyl diphosphate binding site. Residue Cys-198 participates in [4Fe-4S] cluster binding. 3 residues coordinate (2E)-4-hydroxy-3-methylbut-2-enyl diphosphate: Ser-226, Asn-228, and Ser-271. Dimethylallyl diphosphate contacts are provided by Ser-226, Asn-228, and Ser-271. 3 residues coordinate isopentenyl diphosphate: Ser-226, Asn-228, and Ser-271.

The protein belongs to the IspH family. Requires [4Fe-4S] cluster as cofactor.

The enzyme catalyses isopentenyl diphosphate + 2 oxidized [2Fe-2S]-[ferredoxin] + H2O = (2E)-4-hydroxy-3-methylbut-2-enyl diphosphate + 2 reduced [2Fe-2S]-[ferredoxin] + 2 H(+). It catalyses the reaction dimethylallyl diphosphate + 2 oxidized [2Fe-2S]-[ferredoxin] + H2O = (2E)-4-hydroxy-3-methylbut-2-enyl diphosphate + 2 reduced [2Fe-2S]-[ferredoxin] + 2 H(+). Its pathway is isoprenoid biosynthesis; dimethylallyl diphosphate biosynthesis; dimethylallyl diphosphate from (2E)-4-hydroxy-3-methylbutenyl diphosphate: step 1/1. The protein operates within isoprenoid biosynthesis; isopentenyl diphosphate biosynthesis via DXP pathway; isopentenyl diphosphate from 1-deoxy-D-xylulose 5-phosphate: step 6/6. Catalyzes the conversion of 1-hydroxy-2-methyl-2-(E)-butenyl 4-diphosphate (HMBPP) into a mixture of isopentenyl diphosphate (IPP) and dimethylallyl diphosphate (DMAPP). Acts in the terminal step of the DOXP/MEP pathway for isoprenoid precursor biosynthesis. The protein is 4-hydroxy-3-methylbut-2-enyl diphosphate reductase of Bacillus velezensis (strain DSM 23117 / BGSC 10A6 / LMG 26770 / FZB42) (Bacillus amyloliquefaciens subsp. plantarum).